We begin with the raw amino-acid sequence, 158 residues long: NAD(P)H-quinone oxidoreductase subunit J, chloroplastic (158 aa).

It belongs to the complex I 30 kDa subunit family. NDH is composed of at least 16 different subunits, 5 of which are encoded in the nucleus.

The protein localises to the plastid. Its subcellular location is the chloroplast thylakoid membrane. The enzyme catalyses a plastoquinone + NADH + (n+1) H(+)(in) = a plastoquinol + NAD(+) + n H(+)(out). It catalyses the reaction a plastoquinone + NADPH + (n+1) H(+)(in) = a plastoquinol + NADP(+) + n H(+)(out). NDH shuttles electrons from NAD(P)H:plastoquinone, via FMN and iron-sulfur (Fe-S) centers, to quinones in the photosynthetic chain and possibly in a chloroplast respiratory chain. The immediate electron acceptor for the enzyme in this species is believed to be plastoquinone. Couples the redox reaction to proton translocation, and thus conserves the redox energy in a proton gradient. This Morus indica (Mulberry) protein is NAD(P)H-quinone oxidoreductase subunit J, chloroplastic.